The sequence spans 422 residues: UPF0229 protein Spro_2732 (422 aa).

Basic and acidic residues predominate over residues 77 to 90 (PGNDHFVQNDRVER). Positions 77–109 (PGNDHFVQNDRVERPQGGGGGGSGQGNASQDGE) are disordered. A compositionally biased stretch (gly residues) spans 92-101 (QGGGGGGSGQ).

The protein belongs to the UPF0229 family.

The polypeptide is UPF0229 protein Spro_2732 (Serratia proteamaculans (strain 568)).